Consider the following 109-residue polypeptide: Nucleoid-associated protein PM0205 (109 aa).

Belongs to the YbaB/EbfC family. Homodimer.

It localises to the cytoplasm. Its subcellular location is the nucleoid. Functionally, binds to DNA and alters its conformation. May be involved in regulation of gene expression, nucleoid organization and DNA protection. The chain is Nucleoid-associated protein PM0205 from Pasteurella multocida (strain Pm70).